The primary structure comprises 302 residues: Succinate--CoA ligase [ADP-forming] subunit alpha (302 aa).

CoA-binding positions include 17 to 20, Lys43, and 96 to 98; these read TGST and ITE. Tyr159 is a substrate binding site. The Tele-phosphohistidine intermediate role is filled by His247.

Belongs to the succinate/malate CoA ligase alpha subunit family. In terms of assembly, heterotetramer of two alpha and two beta subunits.

It catalyses the reaction succinate + ATP + CoA = succinyl-CoA + ADP + phosphate. It carries out the reaction GTP + succinate + CoA = succinyl-CoA + GDP + phosphate. It functions in the pathway carbohydrate metabolism; tricarboxylic acid cycle; succinate from succinyl-CoA (ligase route): step 1/1. In terms of biological role, succinyl-CoA synthetase functions in the citric acid cycle (TCA), coupling the hydrolysis of succinyl-CoA to the synthesis of either ATP or GTP and thus represents the only step of substrate-level phosphorylation in the TCA. The alpha subunit of the enzyme binds the substrates coenzyme A and phosphate, while succinate binding and nucleotide specificity is provided by the beta subunit. The chain is Succinate--CoA ligase [ADP-forming] subunit alpha from Staphylococcus aureus (strain MSSA476).